Consider the following 730-residue polypeptide: Jacalin-related lectin 5 (730 aa).

The region spanning 1 to 126 (MSWDDGKHTK…LNSIDAHFAP (126 aa)) is the Jacalin-type lectin 1 domain. Residues 121–450 (DAHFAPAPPP…GNQWDDGTDH (330 aa)) are disordered. Composition is skewed to low complexity over residues 138 to 153 (GASG…GSAG), 168 to 179 (AGGSKPSSGSAG), 196 to 207 (AGGSKPSSGSAG), and 248 to 261 (TEKN…SSGS). Residues 275–307 (ETVSNIGDTESNAGGSKSNDGANNGASGIESNA) show a composition bias toward polar residues. Over residues 314-323 (FGAGGTGGIG) the composition is skewed to gly residues. Residues 343-358 (DGASGIGSNDGSTGTN) show a composition bias toward low complexity. Composition is skewed to polar residues over residues 366–375 (DSNIEGTENN) and 388–416 (IGNS…TGGK). Residues 417-429 (ESNTGSESNTNSS) show a composition bias toward low complexity. 2 Jacalin-type lectin domains span residues 430–572 (PQKL…YFVP) and 584–727 (PNKV…YFIP).

It belongs to the jacalin lectin family.

The polypeptide is Jacalin-related lectin 5 (JAL5) (Arabidopsis thaliana (Mouse-ear cress)).